We begin with the raw amino-acid sequence, 80 residues long: Exodeoxyribonuclease 7 small subunit (80 aa).

The protein belongs to the XseB family. As to quaternary structure, heterooligomer composed of large and small subunits.

The protein resides in the cytoplasm. The catalysed reaction is Exonucleolytic cleavage in either 5'- to 3'- or 3'- to 5'-direction to yield nucleoside 5'-phosphates.. Bidirectionally degrades single-stranded DNA into large acid-insoluble oligonucleotides, which are then degraded further into small acid-soluble oligonucleotides. The polypeptide is Exodeoxyribonuclease 7 small subunit (Enterobacter sp. (strain 638)).